A 568-amino-acid polypeptide reads, in one-letter code: 2-succinyl-5-enolpyruvyl-6-hydroxy-3-cyclohexene-1-carboxylate synthase (568 aa).

It belongs to the TPP enzyme family. MenD subfamily. In terms of assembly, homodimer. Mg(2+) is required as a cofactor. The cofactor is Mn(2+). Requires thiamine diphosphate as cofactor.

The enzyme catalyses isochorismate + 2-oxoglutarate + H(+) = 5-enolpyruvoyl-6-hydroxy-2-succinyl-cyclohex-3-ene-1-carboxylate + CO2. It participates in quinol/quinone metabolism; 1,4-dihydroxy-2-naphthoate biosynthesis; 1,4-dihydroxy-2-naphthoate from chorismate: step 2/7. The protein operates within quinol/quinone metabolism; menaquinone biosynthesis. In terms of biological role, catalyzes the thiamine diphosphate-dependent decarboxylation of 2-oxoglutarate and the subsequent addition of the resulting succinic semialdehyde-thiamine pyrophosphate anion to isochorismate to yield 2-succinyl-5-enolpyruvyl-6-hydroxy-3-cyclohexene-1-carboxylate (SEPHCHC). The polypeptide is 2-succinyl-5-enolpyruvyl-6-hydroxy-3-cyclohexene-1-carboxylate synthase (Actinobacillus pleuropneumoniae serotype 3 (strain JL03)).